We begin with the raw amino-acid sequence, 1278 residues long: Sterol regulatory element-binding protein cleavage-activating protein (1278 aa).

The Cytoplasmic portion of the chain corresponds to 1 to 18 (MTLTERLREKISQAFYNH). A helical membrane pass occupies residues 19 to 39 (GLFCASYPIPIILFTGLCILA). Residues 40–279 (CCYPLLKLPL…SLVHVHFKEE (240 aa)) lie on the Lumenal side of the membrane. The tract at residues 46–284 (KLPLPGTGPV…HFKEEIGIAE (239 aa)) is loop-1. The tract at residues 60–80 (PVKDYSPPPLTSDHKPGEPNE) is disordered. N-linked (GlcNAc...) asparagine glycosylation is present at N263. Residues 280–300 (IGIAELIPLVTTYIILFAYIY) traverse the membrane as a helical segment. The SSD domain occupies 284–442 (ELIPLVTTYI…MLFFTTVLSI (159 aa)). The Cytoplasmic segment spans residues 301–312 (FSTRKIDMVKSK). A helical transmembrane segment spans residues 313-333 (WGLALAAVVTVLSSLLMSVGL). Residues 334–344 (CTLFGLTPTLN) lie on the Lumenal side of the membrane. Residues 345 to 365 (GGEIFPYLVVVIGLENVLVLT) traverse the membrane as a helical segment. The Cytoplasmic segment spans residues 366–401 (KSVVSTPVDLEVKLRIAQGLSSESWSIMKNMATELG). A helical membrane pass occupies residues 402 to 422 (IVLIGYFTLVPAIQEFCLFAV). V423 is a topological domain (lumenal). Residues 424–444 (GLVSDFFLQMLFFTTVLSIDI) traverse the membrane as a helical segment. Residues 445–518 (RRMELADLNK…FLARTRLAQR (74 aa)) are Cytoplasmic-facing. An ER export signal motif is present at residues 447-452 (MELADL). Residues K454 and K466 each participate in a glycyl lysine isopeptide (Lys-Gly) (interchain with G-Cter in ubiquitin) cross-link. A helical transmembrane segment spans residues 519–539 (LIMAGTVVWIGILVYTDPAGL). The tract at residues 535–710 (DPAGLRTYLA…QAQRDLTLYK (176 aa)) is loop-7. Residues 540–707 (RTYLAAQVTE…GTAQAQRDLT (168 aa)) are Lumenal-facing. A disordered region spans residues 581 to 618 (PPDASKLPENQTLPGEPPEPGGLAEGVHDSPAPEVTWG). 2 N-linked (GlcNAc...) asparagine glycosylation sites follow: N590 and N641. A disordered region spans residues 668 to 696 (EGRHPQDGRSAWPPPRPGQGGLWEAGPKG). The chain crosses the membrane as a helical span at residues 708–728 (LYKVAALGLASGIVLVLLLLC). The Cytoplasmic portion of the chain corresponds to 729–1278 (LYRVLCPRNY…YVPSVLEKLD (550 aa)). The tract at residues 731-1278 (RVLCPRNYGQ…YVPSVLEKLD (548 aa)) is interaction with SREBF2. Residues 771-811 (VLRGHLMDIECLASDGMLLVSCCLAGHVCVWDAQTGDCLTR) form a WD 1 repeat. Phosphoserine is present on residues S821, S837, S850, S905, and S935. Residues 834–904 (ERLSDGGKGG…RYRAGRRAQD (71 aa)) form a disordered region. WD repeat units lie at residues 951–1001 (PPEK…LRCS) and 1004–1041 (EVSS…ALSP). R1050 is modified (omega-N-methylarginine). 4 WD repeats span residues 1076–1113 (AHQK…CLFT), 1116–1154 (GHSG…RVSH), 1157–1194 (AHRG…KLYS), and 1196–1234 (QQDL…LLQT).

Belongs to the WD repeat SCAP family. As to quaternary structure, membrane region forms a homotetramer. Component of the SCAP-SREBP complex (composed of SCAP and SREBF1/SREBP1 or SREBF2/SREBP2); interacts with SREBF1/SREBP1 or SREBF2/SREBP2 through its C-terminal cytoplasmic domain. Forms a ternary complex with INSIG1 or INSIG2 through its transmembrane domains at high sterol concentrations. Interacts with PAQR3; the interaction anchors the SCAP-SREBP complex to the Golgi apparatus in low cholesterol conditions. Interacts with the SEC23-SEC24 complex in a SAR1-GTP-dependent manner through an ER export signal in its third cytoplasmic loop. Interacts with RNF139; the interaction inhibits the interaction of SCAP with SEC24B and hampering the ER to Golgi transport of the SCAP-SREBP complex. Interacts with SPRING1. Ubiquitinated at Lys-454 and Lys-466. RNF145 triggers ubiquitination of SCAP, likely inhibiting SCAP-SREBP complex transport to the Golgi apparatus and the subsequent processing/maturation of SREBF2/SREBP2.

It is found in the endoplasmic reticulum membrane. It localises to the golgi apparatus membrane. The protein resides in the cytoplasmic vesicle. Its subcellular location is the COPII-coated vesicle membrane. Functionally, escort protein required for cholesterol as well as lipid homeostasis. Regulates export of the SCAP-SREBP complex from the endoplasmic reticulum to the Golgi upon low cholesterol, thereby regulating the processing of sterol regulatory element-binding proteins (SREBPs) SREBF1/SREBP1 and SREBF2/SREBP2. At high sterol concentrations, formation of a ternary complex with INSIG (INSIG1 or INSIG2) leads to mask the ER export signal in SCAP, promoting retention of the complex in the endoplasmic reticulum. Low sterol concentrations trigger release of INSIG, a conformational change in the SSD domain of SCAP, unmasking of the ER export signal, promoting recruitment into COPII-coated vesicles and transport of the SCAP-SREBP to the Golgi: in the Golgi, SREBPs are then processed, releasing the transcription factor fragment of SREBPs from the membrane, its import into the nucleus and up-regulation of LDLR, INSIG1 and the mevalonate pathway. Binds cholesterol via its SSD domain. This is Sterol regulatory element-binding protein cleavage-activating protein from Bos taurus (Bovine).